We begin with the raw amino-acid sequence, 164 residues long: Kunitz-type proteinase inhibitor BbCI (164 aa).

Belongs to the protease inhibitor I3 (leguminous Kunitz-type inhibitor) family.

The protein localises to the secreted. In terms of biological role, inhibits T.cruzi cruzipain. This Bauhinia bauhinioides (Perlebia bauhinoides) protein is Kunitz-type proteinase inhibitor BbCI.